Here is a 218-residue protein sequence, read N- to C-terminus: Octanoyltransferase (218 aa).

One can recognise a BPL/LPL catalytic domain in the interval 31–207 (AQTPDELWLL…QLAAQLGYAE (177 aa)). Substrate is bound by residues 70–77 (RGGQVTYH), 137–139 (SLG), and 150–152 (GLA). The Acyl-thioester intermediate role is filled by cysteine 168.

The protein belongs to the LipB family.

The protein localises to the cytoplasm. The catalysed reaction is octanoyl-[ACP] + L-lysyl-[protein] = N(6)-octanoyl-L-lysyl-[protein] + holo-[ACP] + H(+). Its pathway is protein modification; protein lipoylation via endogenous pathway; protein N(6)-(lipoyl)lysine from octanoyl-[acyl-carrier-protein]: step 1/2. Catalyzes the transfer of endogenously produced octanoic acid from octanoyl-acyl-carrier-protein onto the lipoyl domains of lipoate-dependent enzymes. Lipoyl-ACP can also act as a substrate although octanoyl-ACP is likely to be the physiological substrate. The polypeptide is Octanoyltransferase (Azotobacter vinelandii (strain DJ / ATCC BAA-1303)).